Here is a 515-residue protein sequence, read N- to C-terminus: Interferon-induced, double-stranded RNA-activated protein kinase (515 aa).

A2 carries the post-translational modification N-acetylalanine. The 69-residue stretch at 8–76 folds into the DRBM 1 domain; sequence FYMDKLNKYR…AKLAVDILDN (69 aa). Residue K68 forms a Glycyl lysine isopeptide (Lys-Gly) (interchain with G-Cter in ISG15) linkage. Position 84 is a phosphothreonine (T84). Residues 95–162 enclose the DRBM 2 domain; sequence NYIGLVNSFA…AKEAYQKLLK (68 aa). Y96 carries the post-translational modification Phosphotyrosine; by autocatalysis. A Glycyl lysine isopeptide (Lys-Gly) (interchain with G-Cter in ISG15) cross-link involves residue K154. Y157 carries the post-translational modification Phosphotyrosine; by autocatalysis. The tract at residues 204–224 is disordered; sequence ENVFTNGLGENKRKSGVKVSP. At T233 the chain carries Phosphothreonine. The segment at 241 to 515 is interaction with TRAF5; sequence DFEDIEEIGL…ISEKKKRNTC (275 aa). The region spanning 242-504 is the Protein kinase domain; it reads FEDIEEIGLG…EILKTLAEWR (263 aa). Residue 248-256 participates in ATP binding; sequence IGLGGFGQV. Y268 bears the Phosphotyrosine; by autocatalysis mark. K271 is a binding site for ATP. Catalysis depends on D376, which acts as the Proton acceptor. Phosphothreonine; by autocatalysis is present on residues T409 and T414. S419 carries the post-translational modification Phosphoserine.

The protein belongs to the protein kinase superfamily. Ser/Thr protein kinase family. GCN2 subfamily. As to quaternary structure, homodimer. Interacts with DNAJC3 and STRBP. Forms a complex with FANCA, FANCC, FANCG and HSP70. Interacts with ADAR/ADAR1. The inactive form interacts with NCK1. Interacts (via the kinase catalytic domain) with STAT3 (via SH2 domain), TRAF2 (C-terminus), TRAF5 (C-terminus) and TRAF6 (C-terminus). Interacts with MAP2K6, TARBP2, NLRP1, NLRC4 and AIM2. Interacts (via DRBM 1 domain) with DUS2L (via DRBM domain). Interacts with DHX9 (via N-terminus) and this interaction is dependent upon activation of the kinase. The inactive form interacts with GSN. Interacts with IKBKB/IKKB, NPM1, NLRP3 and IRS1. In terms of processing, autophosphorylated on several Ser, Thr and Tyr residues. Autophosphorylation of Thr-414 is dependent on Thr-409 and is stimulated by dsRNA binding and dimerization. Autophosphorylation apparently leads to the activation of the kinase. Tyrosine autophosphorylation is essential for efficient dsRNA-binding, dimerization, and kinase activation. As to expression, expressed in heart, lung, brain, kidney, testes, thymus and bone marrow.

The protein localises to the cytoplasm. It localises to the nucleus. The protein resides in the perinuclear region. It carries out the reaction L-seryl-[protein] + ATP = O-phospho-L-seryl-[protein] + ADP + H(+). The catalysed reaction is L-threonyl-[protein] + ATP = O-phospho-L-threonyl-[protein] + ADP + H(+). The enzyme catalyses L-tyrosyl-[protein] + ATP = O-phospho-L-tyrosyl-[protein] + ADP + H(+). With respect to regulation, initially produced in an inactive form and is activated by binding to viral dsRNA, which causes dimerization and autophosphorylation in the activation loop and stimulation of function. ISGylation can activate it in the absence of viral infection. Can also be activated by heparin, pro-inflammatory stimuli, growth factors, cytokines, oxidative stress and the cellular protein PRKRA. Activity is markedly stimulated by manganese ions. Activation is blocked by the cellular proteins TARBP2, DUS2L, NPM1, NCK1 and ADAR. Functionally, IFN-induced dsRNA-dependent serine/threonine-protein kinase that phosphorylates the alpha subunit of eukaryotic translation initiation factor 2 (EIF2S1/eIF-2-alpha) and plays a key role in the innate immune response to viral infection. Inhibits viral replication via the integrated stress response (ISR): EIF2S1/eIF-2-alpha phosphorylation in response to viral infection converts EIF2S1/eIF-2-alpha in a global protein synthesis inhibitor, resulting to a shutdown of cellular and viral protein synthesis, while concomitantly initiating the preferential translation of ISR-specific mRNAs, such as the transcriptional activator ATF4. Exerts its antiviral activity on a wide range of DNA and RNA viruses including west nile virus (WNV), sindbis virus (SV), foot-and-mouth virus (FMDV), semliki Forest virus (SFV) and lymphocytic choriomeningitis virus (LCMV). Also involved in the regulation of signal transduction, apoptosis, cell proliferation and differentiation: phosphorylates other substrates including p53/TP53, PPP2R5A, DHX9, ILF3, and IRS1. In addition to serine/threonine-protein kinase activity, also has tyrosine-protein kinase activity and phosphorylates CDK1 at 'Tyr-4' upon DNA damage, facilitating its ubiquitination and proteasomal degradation. Either as an adapter protein and/or via its kinase activity, can regulate various signaling pathways (p38 MAP kinase, NF-kappa-B and insulin signaling pathways) and transcription factors (JUN, STAT1, STAT3, IRF1, ATF3) involved in the expression of genes encoding pro-inflammatory cytokines and IFNs. Activates the NF-kappa-B pathway via interaction with IKBKB and TRAF family of proteins and activates the p38 MAP kinase pathway via interaction with MAP2K6. Can act as both a positive and negative regulator of the insulin signaling pathway (ISP). Negatively regulates ISP by inducing the inhibitory phosphorylation of insulin receptor substrate 1 (IRS1) at 'Ser-312' and positively regulates ISP via phosphorylation of PPP2R5A which activates FOXO1, which in turn up-regulates the expression of insulin receptor substrate 2 (IRS2). Can regulate NLRP3 inflammasome assembly and the activation of NLRP3, NLRP1, AIM2 and NLRC4 inflammasomes. Plays a role in the regulation of the cytoskeleton by binding to gelsolin (GSN), sequestering the protein in an inactive conformation away from actin. The chain is Interferon-induced, double-stranded RNA-activated protein kinase (Eif2ak2) from Mus musculus (Mouse).